A 330-amino-acid polypeptide reads, in one-letter code: Small ribosomal subunit protein uS2 (330 aa).

It belongs to the universal ribosomal protein uS2 family.

This Rhodopseudomonas palustris (strain BisA53) protein is Small ribosomal subunit protein uS2.